The sequence spans 333 residues: Anthranilate phosphoribosyltransferase (333 aa).

5-phospho-alpha-D-ribose 1-diphosphate-binding positions include Gly-81, 84 to 85 (GD), Thr-89, 91 to 94 (NIST), 109 to 117 (KHGNRSVSS), and Ser-121. Gly-81 provides a ligand contact to anthranilate. Position 93 (Ser-93) interacts with Mg(2+). Asn-112 provides a ligand contact to anthranilate. Arg-167 contributes to the anthranilate binding site. Residues Asp-225 and Glu-226 each contribute to the Mg(2+) site.

This sequence belongs to the anthranilate phosphoribosyltransferase family. Homodimer. Requires Mg(2+) as cofactor.

It catalyses the reaction N-(5-phospho-beta-D-ribosyl)anthranilate + diphosphate = 5-phospho-alpha-D-ribose 1-diphosphate + anthranilate. The protein operates within amino-acid biosynthesis; L-tryptophan biosynthesis; L-tryptophan from chorismate: step 2/5. In terms of biological role, catalyzes the transfer of the phosphoribosyl group of 5-phosphorylribose-1-pyrophosphate (PRPP) to anthranilate to yield N-(5'-phosphoribosyl)-anthranilate (PRA). The polypeptide is Anthranilate phosphoribosyltransferase (Glaesserella parasuis serovar 5 (strain SH0165) (Haemophilus parasuis)).